The chain runs to 304 residues: Non-specific ribonucleoside hydrolase RihC (304 aa).

Histidine 233 is an active-site residue.

The protein belongs to the IUNH family. RihC subfamily.

Its function is as follows. Hydrolyzes both purine and pyrimidine ribonucleosides with a broad-substrate specificity. This Escherichia coli (strain 55989 / EAEC) protein is Non-specific ribonucleoside hydrolase RihC.